We begin with the raw amino-acid sequence, 72 residues long: Translation initiation factor IF-1 (72 aa).

In terms of domain architecture, S1-like spans 1–72; sequence MAKDDVIEVE…TRGRITYRYK (72 aa). Y60 is subject to Phosphotyrosine.

This sequence belongs to the IF-1 family. As to quaternary structure, component of the 30S ribosomal translation pre-initiation complex which assembles on the 30S ribosome in the order IF-2 and IF-3, IF-1 and N-formylmethionyl-tRNA(fMet); mRNA recruitment can occur at any time during PIC assembly.

Its subcellular location is the cytoplasm. Its function is as follows. One of the essential components for the initiation of protein synthesis. Stabilizes the binding of IF-2 and IF-3 on the 30S subunit to which N-formylmethionyl-tRNA(fMet) subsequently binds. Helps modulate mRNA selection, yielding the 30S pre-initiation complex (PIC). Upon addition of the 50S ribosomal subunit IF-1, IF-2 and IF-3 are released leaving the mature 70S translation initiation complex. In Geobacillus kaustophilus (strain HTA426), this protein is Translation initiation factor IF-1.